The chain runs to 164 residues: Phosphopantetheine adenylyltransferase (164 aa).

Substrate is bound at residue Ser-10. Residues 10–11 (SF) and His-18 each bind ATP. Substrate is bound by residues Lys-42, Leu-74, and Arg-88. ATP contacts are provided by residues 89-91 (GLR), Glu-99, and 124-130 (YSFLSSS).

This sequence belongs to the bacterial CoaD family. In terms of assembly, homohexamer. It depends on Mg(2+) as a cofactor.

It is found in the cytoplasm. It carries out the reaction (R)-4'-phosphopantetheine + ATP + H(+) = 3'-dephospho-CoA + diphosphate. Its pathway is cofactor biosynthesis; coenzyme A biosynthesis; CoA from (R)-pantothenate: step 4/5. In terms of biological role, reversibly transfers an adenylyl group from ATP to 4'-phosphopantetheine, yielding dephospho-CoA (dPCoA) and pyrophosphate. The sequence is that of Phosphopantetheine adenylyltransferase from Bacillus licheniformis (strain ATCC 14580 / DSM 13 / JCM 2505 / CCUG 7422 / NBRC 12200 / NCIMB 9375 / NCTC 10341 / NRRL NRS-1264 / Gibson 46).